A 383-amino-acid polypeptide reads, in one-letter code: Aliphatic nitrilase (383 aa).

The region spanning 13–288 is the CN hydrolase domain; sequence VKVATVQAEP…EGLLYAELDL (276 aa). Catalysis depends on glutamate 53, which acts as the Proton acceptor. Lysine 136 functions as the Proton donor in the catalytic mechanism. Cysteine 170 serves as the catalytic Nucleophile. The disordered stretch occupies residues 359-383; the sequence is ATLPLDAPAPAPAPEQKSGRAKAEA.

It belongs to the carbon-nitrogen hydrolase superfamily. Nitrilase family.

The catalysed reaction is an aliphatic nitrile + 2 H2O = a carboxylate + NH4(+). Its function is as follows. Acts on aliphatic nitriles such as acrylonitrile, crotononitrile and glutaronitrile. The chain is Aliphatic nitrilase from Rhodococcus rhodochrous.